Here is a 280-residue protein sequence, read N- to C-terminus: uncharacterized protein (280 aa).

Tyr-54 serves as the catalytic Proton donor. Residue His-116 coordinates substrate. 194 to 246 contributes to the NADP(+) binding site; the sequence is SPLMQGQLLDHPVLADIAQTYNKSVAQIILRWDLQHGIITIPKSTKEHRIKEN.

The protein belongs to the aldo/keto reductase family.

This is an uncharacterized protein from Bacillus subtilis (strain 168).